A 145-amino-acid chain; its full sequence is Antiholin-like protein LrgA (145 aa).

The next 4 membrane-spanning stretches (helical) occupy residues 10 to 30, 33 to 53, 72 to 92, and 96 to 116; these read PAHFFHQVIVIALVLFVSKII, FMPIPMPASVIGLVLLFVLLC, NIGLLFVPAGISVVNSLGVIS, and FLIIGLIIVSTILLLICTGYV.

The protein belongs to the CidA/LrgA family. LrgA subfamily.

It localises to the cell membrane. Its function is as follows. Inhibits the expression or activity of extracellular murein hydrolases by interacting, possibly with LrgB, with the holin-like proteins CidA and/or CidB. The LrgAB and CidAB proteins may affect the proton motive force of the membrane. May be involved in programmed cell death (PCD), possibly triggering PCD in response to antibiotics and environmental stresses. In Staphylococcus aureus (strain Mu3 / ATCC 700698), this protein is Antiholin-like protein LrgA.